Reading from the N-terminus, the 304-residue chain is C-type lectin domain-containing protein 141 (304 aa).

The N-terminal stretch at 1 to 19 (MRSSSTLLIAFGLFLASMS) is a signal peptide. The segment at 29–100 (GSGGHRPPSS…TTPEPTTTKV (72 aa)) is disordered. Residues 51–99 (TKPPKSTSTPSTSTSTPTTTTTTTTTTTTTPTTTTTTTTTTTPEPTTTK) are compositionally biased toward low complexity.

This is C-type lectin domain-containing protein 141 (clec-141) from Caenorhabditis elegans.